The chain runs to 141 residues: Large ribosomal subunit protein uL11 (141 aa).

This sequence belongs to the universal ribosomal protein uL11 family. As to quaternary structure, part of the ribosomal stalk of the 50S ribosomal subunit. Interacts with L10 and the large rRNA to form the base of the stalk. L10 forms an elongated spine to which L12 dimers bind in a sequential fashion forming a multimeric L10(L12)X complex. One or more lysine residues are methylated.

Its function is as follows. Forms part of the ribosomal stalk which helps the ribosome interact with GTP-bound translation factors. The chain is Large ribosomal subunit protein uL11 from Shouchella clausii (strain KSM-K16) (Alkalihalobacillus clausii).